The primary structure comprises 340 residues: MEPGRTQIKLDPRYTADLLEVLKTNYGIPSACFSQPPTAAQLLRALGPVELALTSILTLLALGSIAIFLEDAVYLYKNTLCPIKRRTLLWKSSAPTVVSVLCCFGLWIPRSLVLVEMTITSFYAVCFYLLMLVMVEGFGGKEAVLRTLRDTPMMVHTGPCCCCCPCCPRLLLTRKKLQLLMLGPFQYAFLKITLTLVGLFLVPDGIYDPADISEGSTALWINTFLGVSTLLALWTLGIISRQARLHLGEQNMGAKFALFQVLLILTALQPSIFSVLANGGQIACSPPYSSKTRSQVMNCHLLILETFLMTVLTRMYYRRKDHKVGYETFSSPDLDLNLKA.

Topologically, residues 1–48 (MEPGRTQIKLDPRYTADLLEVLKTNYGIPSACFSQPPTAAQLLRALGP) are extracellular. A helical transmembrane segment spans residues 49–69 (VELALTSILTLLALGSIAIFL). Over 70–87 (EDAVYLYKNTLCPIKRRT) the chain is Cytoplasmic. The helical transmembrane segment at 88-108 (LLWKSSAPTVVSVLCCFGLWI) threads the bilayer. The Extracellular portion of the chain corresponds to 109–118 (PRSLVLVEMT). Residues 119-139 (ITSFYAVCFYLLMLVMVEGFG) traverse the membrane as a helical segment. At 140–181 (GKEAVLRTLRDTPMMVHTGPCCCCCPCCPRLLLTRKKLQLLM) the chain is on the cytoplasmic side. The chain crosses the membrane as a helical span at residues 182 to 202 (LGPFQYAFLKITLTLVGLFLV). Residues 203-218 (PDGIYDPADISEGSTA) lie on the Extracellular side of the membrane. Residues 219–239 (LWINTFLGVSTLLALWTLGII) traverse the membrane as a helical segment. Residues 240–255 (SRQARLHLGEQNMGAK) are Cytoplasmic-facing. The chain crosses the membrane as a helical span at residues 256–276 (FALFQVLLILTALQPSIFSVL). Over 277-294 (ANGGQIACSPPYSSKTRS) the chain is Extracellular. A helical transmembrane segment spans residues 295–317 (QVMNCHLLILETFLMTVLTRMYY). Residues 318–340 (RRKDHKVGYETFSSPDLDLNLKA) lie on the Cytoplasmic side of the membrane. Residue Ser-330 is modified to Phosphoserine.

Belongs to the OST-alpha family. As to quaternary structure, interacts with SLC51B. The Ost-alpha/Ost-beta complex is a heterodimer composed of alpha (SLC51A) and beta (SLC51B) subunit. Widely expressed with a high expression in ileum. Expressed in testis, colon, liver, small intestine, kidney, ovary and adrenal gland; and at low levels in heart, lung, brain, pituitary, thyroid gland, uterus, prostate, mammary gland and fat.

Its subcellular location is the cell membrane. The protein resides in the endoplasmic reticulum membrane. The enzyme catalyses taurocholate(out) = taurocholate(in). It catalyses the reaction estrone 3-sulfate(out) = estrone 3-sulfate(in). The catalysed reaction is dehydroepiandrosterone 3-sulfate(out) = dehydroepiandrosterone 3-sulfate(in). It carries out the reaction tauroursodeoxycholate(out) = tauroursodeoxycholate(in). The enzyme catalyses glycoursodeoxycholate(out) = glycoursodeoxycholate(in). It catalyses the reaction glycocholate(out) = glycocholate(in). The catalysed reaction is taurochenodeoxycholate(out) = taurochenodeoxycholate(in). It carries out the reaction glycochenodeoxycholate(out) = glycochenodeoxycholate(in). The enzyme catalyses taurodeoxycholate(out) = taurodeoxycholate(in). It catalyses the reaction glycodeoxycholate(out) = glycodeoxycholate(in). The catalysed reaction is prostaglandin E2(out) = prostaglandin E2(in). In terms of biological role, essential component of the Ost-alpha/Ost-beta complex, a heterodimer that acts as the intestinal basolateral transporter responsible for bile acid export from enterocytes into portal blood. Efficiently transports the major species of bile acids (taurocholate). Taurine conjugates are transported more efficiently across the basolateral membrane than glycine-conjugated bile acids. Can also transport steroids such as estrone 3-sulfate and dehydroepiandrosterone 3-sulfate, therefore playing a role in the enterohepatic circulation of sterols. Able to transport eicosanoids such as prostaglandin E2. This Homo sapiens (Human) protein is Organic solute transporter subunit alpha (SLC51A).